We begin with the raw amino-acid sequence, 162 residues long: Small ribosomal subunit protein uS9 (162 aa).

The protein belongs to the universal ribosomal protein uS9 family.

In Parvibaculum lavamentivorans (strain DS-1 / DSM 13023 / NCIMB 13966), this protein is Small ribosomal subunit protein uS9.